The following is a 328-amino-acid chain: MTATKLHKKVILVGDGAVGSSYAFALVNQGIAQELGIIEIPQLFEKAVGDALDLSHALPFTSPKKIYAAKYEDCADADLVVITAGAPQKPGETRLDLVGKNLAINKSIVTQVVESGFNGIFLVAANPVDVLTYSTWKFSGFPKERVIGSGTSLDSARFRQALAEKLNVDARSVHAYIMGEHGDSEFAVWSHANIAGVNLEEFLKDKENVQEAELVELFEGVRDAAYTIINKKGATYYGIAVALARITKAILDDENAVLPLSVFQEGQYGVNNIFIGQPAIVGAHGIVRPVNIPLNDAEQQKMKASADELQAIIDEAWKNPEFQEASKN.

Residues Val-18, Glu-39, Lys-46, Tyr-71, and 85-86 (GA) each bind NAD(+). Substrate is bound by residues Gln-88 and Arg-94. NAD(+) contacts are provided by residues Ser-107, 124–126 (AAN), and Ser-149. 126–129 (NPVD) serves as a coordination point for substrate. 154-157 (DSAR) contributes to the substrate binding site. Residues Arg-159 and His-174 each contribute to the beta-D-fructose 1,6-bisphosphate site. His-181 serves as the catalytic Proton acceptor. Position 226 is a phosphotyrosine (Tyr-226). Thr-235 is a substrate binding site.

Belongs to the LDH/MDH superfamily. LDH family. As to quaternary structure, homotetramer.

The protein resides in the cytoplasm. It carries out the reaction (S)-lactate + NAD(+) = pyruvate + NADH + H(+). The protein operates within fermentation; pyruvate fermentation to lactate; (S)-lactate from pyruvate: step 1/1. Allosterically activated by fructose 1,6-bisphosphate (FBP). In terms of biological role, catalyzes the conversion of lactate to pyruvate. The polypeptide is L-lactate dehydrogenase (Streptococcus thermophilus (strain CNRZ 1066)).